The chain runs to 405 residues: L-carnitine CoA-transferase (405 aa).

Positions 97 and 104 each coordinate CoA. Residue D169 is the Nucleophile of the active site.

The protein belongs to the CoA-transferase III family. CaiB subfamily. As to quaternary structure, homodimer.

It localises to the cytoplasm. It carries out the reaction crotonobetainyl-CoA + (R)-carnitine = crotonobetaine + (R)-carnitinyl-CoA. It catalyses the reaction 4-(trimethylamino)butanoyl-CoA + (R)-carnitine = (R)-carnitinyl-CoA + 4-(trimethylamino)butanoate. The protein operates within amine and polyamine metabolism; carnitine metabolism. Functionally, catalyzes the reversible transfer of the CoA moiety from gamma-butyrobetainyl-CoA to L-carnitine to generate L-carnitinyl-CoA and gamma-butyrobetaine. Is also able to catalyze the reversible transfer of the CoA moiety from gamma-butyrobetainyl-CoA or L-carnitinyl-CoA to crotonobetaine to generate crotonobetainyl-CoA. This Escherichia coli O6:K15:H31 (strain 536 / UPEC) protein is L-carnitine CoA-transferase.